The chain runs to 1321 residues: Bile salt export pump (1321 aa).

The Cytoplasmic portion of the chain corresponds to Met-1–Met-62. The 324-residue stretch at Met-62–Ala-385 folds into the ABC transmembrane type-1 1 domain. The chain crosses the membrane as a helical span at residues Cys-63 to Phe-83. The Extracellular portion of the chain corresponds to Gly-84 to Gly-147. N-linked (GlcNAc...) asparagine glycans are attached at residues Asn-109, Asn-116, Asn-122, and Asn-125. Residues Ile-148–Ala-168 form a helical membrane-spanning segment. Over His-169 to Asp-215 the chain is Cytoplasmic. Residues Gln-216–Ser-236 form a helical membrane-spanning segment. Residues Gln-237 to Lys-240 lie on the Extracellular side of the membrane. The chain crosses the membrane as a helical span at residues Leu-241–Leu-261. Residues Ser-262 to Gly-319 lie on the Cytoplasmic side of the membrane. Residues Ile-320–Ala-340 traverse the membrane as a helical segment. Over Phe-341 to Glu-353 the chain is Extracellular. A helical membrane pass occupies residues Tyr-354–Gly-374. At Asn-375–Met-755 the chain is on the cytoplasmic side. The region spanning Ile-420 to Leu-656 is the ABC transporter 1 domain. Gly-455–Ser-462 serves as a coordination point for ATP. At Thr-586 the chain carries Phosphothreonine. Residue Ser-587 is modified to Phosphoserine. Residues Phe-651 to Ala-672 are interaction with HAX1. The interval Gln-659–Asp-735 is disordered. Acidic residues predominate over residues Asp-664 to Ile-677. A phosphoserine mark is found at Ser-690, Ser-701, and Ser-704. Residues Val-714–Pro-731 show a composition bias toward basic and acidic residues. One can recognise an ABC transmembrane type-1 2 domain in the interval Met-755–Lys-1043. A helical transmembrane segment spans residues Leu-756–Phe-776. At Ser-777–Gln-794 the chain is on the extracellular side. A helical transmembrane segment spans residues Ile-795–Leu-815. Residues Gln-816–Gln-869 lie on the Cytoplasmic side of the membrane. 2 helical membrane-spanning segments follow: residues Gly-870–Met-890 and Ile-891–Leu-911. Topologically, residues Ala-912 to Asn-979 are cytoplasmic. Residues Val-980–Tyr-1000 traverse the membrane as a helical segment. At Arg-1001–Gly-1011 the chain is on the extracellular side. A helical transmembrane segment spans residues Leu-1012–Gly-1032. The Cytoplasmic portion of the chain corresponds to Arg-1033–Ser-1321. Residues Ile-1078 to Thr-1316 enclose the ABC transporter 2 domain. An ATP-binding site is contributed by Gly-1113–Ser-1120. Residues Ser-1214 and Ser-1321 each carry the phosphoserine modification.

The protein belongs to the ABC transporter superfamily. ABCB family. Multidrug resistance exporter (TC 3.A.1.201) subfamily. Interacts with HAX1. Interacts with the adapter protein complex 2 (AP-2) throught AP2A2 or AP2A1; this interaction regulates cell membrane expression of ABCB11 through its internalization in a clathrin-dependent manner and its subsequent degradation. Post-translationally, N-glycosylated. Ubiquitinated; short-chain ubiquitination regulates cell-Surface expression of ABCB11. Expressed predominantly, if not exclusively in the liver, where it was further localized to the canalicular microvilli and to subcanalicular vesicles of the hepatocytes by in situ.

It localises to the apical cell membrane. The protein localises to the recycling endosome membrane. Its subcellular location is the endosome. It is found in the cell membrane. The catalysed reaction is cholate(in) + ATP + H2O = cholate(out) + ADP + phosphate + H(+). It carries out the reaction taurocholate(in) + ATP + H2O = taurocholate(out) + ADP + phosphate + H(+). It catalyses the reaction glycocholate(in) + ATP + H2O = glycocholate(out) + ADP + phosphate + H(+). The enzyme catalyses glycochenodeoxycholate(in) + ATP + H2O = glycochenodeoxycholate(out) + ADP + phosphate + H(+). The catalysed reaction is taurochenodeoxycholate(in) + ATP + H2O = taurochenodeoxycholate(out) + ADP + phosphate + H(+). It carries out the reaction glycoursodeoxycholate(in) + ATP + H2O = glycoursodeoxycholate(out) + ADP + phosphate + H(+). It catalyses the reaction tauroursodeoxycholate(in) + ATP + H2O = tauroursodeoxycholate(out) + ADP + phosphate + H(+). The enzyme catalyses taurodeoxycholate(in) + ATP + H2O = taurodeoxycholate(out) + ADP + phosphate + H(+). The catalysed reaction is taurolithocholate 3-sulfate(in) + ATP + H2O = taurolithocholate 3-sulfate(out) + ADP + phosphate + H(+). It carries out the reaction pravastatin(in) + ATP + H2O = pravastatin(out) + ADP + phosphate + H(+). The uptake of taurocholate is inhibited by taurolithocholate sulfate with an IC(50) of 9 uM. Pravastatin competitively inhibits the transport of taurocholic acid. Cyclosporin A, glibenclamide, rifampicin and troglitazonestrongly competitively inhibit the transport activity of taurocholate. The canalicular transport activity of taurocholate is strongly dependent on canalicular membrane cholesterol content. The uptake of taurocholate is increased by short- and medium-chain fatty acids. Cholesterol increases transport capacity of taurocholate without affecting the affinity for the substrate. Its function is as follows. Catalyzes the transport of the major hydrophobic bile salts, such as taurine and glycine-conjugated cholic acid across the canalicular membrane of hepatocytes in an ATP-dependent manner, therefore participates in hepatic bile acid homeostasis and consequently to lipid homeostasis through regulation of biliary lipid secretion in a bile salts dependent manner. Transports taurine-conjugated bile salts more rapidly than glycine-conjugated bile salts. Also transports non-bile acid compounds, such as pravastatin and fexofenadine in an ATP-dependent manner and may be involved in their biliary excretion. The chain is Bile salt export pump from Oryctolagus cuniculus (Rabbit).